We begin with the raw amino-acid sequence, 694 residues long: Elongation factor G 1 (694 aa).

Positions 5 to 280 (SRYRNIGIFA…AVVDYLPDPT (276 aa)) constitute a tr-type G domain. GTP is bound by residues 14-21 (AHVDAGKT), 78-82 (DTPGH), and 132-135 (NKLD).

This sequence belongs to the TRAFAC class translation factor GTPase superfamily. Classic translation factor GTPase family. EF-G/EF-2 subfamily.

It localises to the cytoplasm. In terms of biological role, catalyzes the GTP-dependent ribosomal translocation step during translation elongation. During this step, the ribosome changes from the pre-translocational (PRE) to the post-translocational (POST) state as the newly formed A-site-bound peptidyl-tRNA and P-site-bound deacylated tRNA move to the P and E sites, respectively. Catalyzes the coordinated movement of the two tRNA molecules, the mRNA and conformational changes in the ribosome. This is Elongation factor G 1 from Methylococcus capsulatus (strain ATCC 33009 / NCIMB 11132 / Bath).